Consider the following 135-residue polypeptide: uncharacterized protein (135 aa).

This is an uncharacterized protein from Schizosaccharomyces pombe (strain 972 / ATCC 24843) (Fission yeast).